The chain runs to 223 residues: NLP effector protein 2 (223 aa).

A Conserved undecapeptide motif motif is present at residues 90-100 (AIMYSWYFPKD). The short motif at 107-113 (GHRHDWE) is the Conserved p motif element.

The protein belongs to the Necrosis inducing protein (NPP1) family.

The protein resides in the secreted. The protein localises to the host cytoplasm. Probable secreted effector that may act as a pathogen-associated molecular pattern (PAMP) recognized by the plant immune system. Seems not to induce necrosis, neither in several susceptible or resistant Vitis species nor in the dicot model plant Nicotiana benthamiana. This chain is NLP effector protein 2, found in Plasmopara viticola (Downy mildew of grapevine).